Reading from the N-terminus, the 651-residue chain is Probable potassium transport system protein Kup (651 aa).

Transmembrane regions (helical) follow at residues 41 to 61 (LVLG…IYAF), 82 to 102 (VVSL…VLFV), 130 to 150 (LILG…VITP), 163 to 183 (IVAP…LVTL), 194 to 214 (VAIV…ASGL), 235 to 255 (FLTV…LAMT), 276 to 296 (WLWI…AFIL), 309 to 329 (MIPS…TVIA), 366 to 386 (IYIP…VLGF), 395 to 415 (AYGI…YIVM), 426 to 446 (ALPI…ANII), and 450 to 470 (EGGW…WTWV).

The protein belongs to the HAK/KUP transporter (TC 2.A.72) family.

It is found in the cell inner membrane. The catalysed reaction is K(+)(in) + H(+)(in) = K(+)(out) + H(+)(out). Its function is as follows. Transport of potassium into the cell. Likely operates as a K(+):H(+) symporter. This chain is Probable potassium transport system protein Kup, found in Brucella suis (strain ATCC 23445 / NCTC 10510).